The primary structure comprises 155 residues: Prespore-specific protein E (155 aa).

An N-terminal signal peptide occupies residues 1 to 20; it reads MRFISIFLIIVALCVSSSWA. N-linked (GlcNAc...) asparagine glycans are attached at residues N22, N82, N85, and N102. S105 carries an O-linked (GlcNAc) serine glycan. N133 carries GPI-like-anchor amidated asparagine lipidation. The propeptide at 134–155 is removed in mature form; sequence SADKVAVGIAIIFGALISLLAL.

In terms of processing, the GPI-like-anchor contains a phosphoceramide group, rather than a phosphatidyl group.

It is found in the cell membrane. The protein is Prespore-specific protein E (pspE) of Dictyostelium discoideum (Social amoeba).